A 398-amino-acid chain; its full sequence is MKILVLNCGSSSLKYQLIDMNNEEVLCIGLVERIGIEGSILKHEKAGRDDKYVVEQPMKDHKDAIALVLEAVAHPEFGAVKEMKEIDAVGHRVVHAGEKFATSVVITPEVEEALKECIDLAPLHNPANIMGIDACKAILPDVPMVGVFDTAFHQTMPKSSYLYGLPHELYTKYGVRRYGFHGTSHNYVSQRAAEILGKDIKDLKIVTCHLGNGASIAAVDGGKCVDTSMGFTPLEGLIMGTRCGDIDPAILPFLMRKEGLDADGLDKLMNKESGVYGMTGISSDFRDIEDAAKNGDERAQATLEAYVKKVQKYIGAYAAEMNGLDVVVFTAGVGENGKAIRADIASNMEFLGMKLDKEANDVRGKETVISTADSKVKMLLIPTNEELMIARDTLRLVK.

Asn-7 lines the Mg(2+) pocket. Residue Lys-14 participates in ATP binding. Residue Arg-92 participates in substrate binding. Asp-149 serves as the catalytic Proton donor/acceptor. Residues 209–213, 284–286, and 332–336 contribute to the ATP site; these read HLGNG, DFR, and GVGEN. Glu-385 contributes to the Mg(2+) binding site.

This sequence belongs to the acetokinase family. In terms of assembly, homodimer. Requires Mg(2+) as cofactor. The cofactor is Mn(2+).

The protein resides in the cytoplasm. It catalyses the reaction acetate + ATP = acetyl phosphate + ADP. It functions in the pathway metabolic intermediate biosynthesis; acetyl-CoA biosynthesis; acetyl-CoA from acetate: step 1/2. In terms of biological role, catalyzes the formation of acetyl phosphate from acetate and ATP. Can also catalyze the reverse reaction. This is Acetate kinase from Clostridioides difficile (strain 630) (Peptoclostridium difficile).